The sequence spans 444 residues: Zinc finger CCCH domain-containing protein 63 (444 aa).

3 consecutive C3H1-type zinc fingers follow at residues 56–84 (RIGEPDCSYYMRTGLCRFGMTCKFNHPAD), 101–129 (RIGQPECQYYLKTGTCKFGATCKFHHPRE), and 147–175 (RPNEKECAYYLRTGQCKFGSTCKFHHPQP). The disordered stretch occupies residues 251-276 (GSSSSDDQQRTAGGAQYYTGSRHSET). 2 C3H1-type zinc fingers span residues 309–337 (RPDQPECQFYMKTGDCKFGAVCKFHHPKE) and 355–383 (RPGEPICTFYSRYGICKFGPNCKFDHPMG). Positions 405–444 (PVPAHSEVSPDNVSGRSRRITHSDSQQIPSGERGTEREAS) are disordered.

This chain is Zinc finger CCCH domain-containing protein 63, found in Oryza sativa subsp. japonica (Rice).